A 140-amino-acid chain; its full sequence is Small ribosomal subunit protein uS12m (140 aa).

A mitochondrion-targeting transit peptide spans 1–30 (MNFLRQSFGITKQLASQAIQCSYETAVRGM).

Belongs to the universal ribosomal protein uS12 family.

Its subcellular location is the mitochondrion. The chain is Small ribosomal subunit protein uS12m (tko) from Drosophila melanogaster (Fruit fly).